The following is a 216-amino-acid chain: Small ribosomal subunit protein uS3c (216 aa).

Residues 39 to 109 (IRSYINRELE…SIRINVIELT (71 aa)) enclose the KH type-2 domain.

It belongs to the universal ribosomal protein uS3 family. In terms of assembly, part of the 30S ribosomal subunit.

It is found in the plastid. The protein resides in the chloroplast. This Guillardia theta (Cryptophyte) protein is Small ribosomal subunit protein uS3c (rps3).